The chain runs to 191 residues: Cell division protein SepF (191 aa).

The segment covering 156 to 167 (EEASPSNMSNKG) has biased composition (polar residues). Residues 156–191 (EEASPSNMSNKGNDLISKETSPAPEPAWGETVATAL) are disordered.

This sequence belongs to the SepF family. Homodimer. Interacts with FtsZ.

Its subcellular location is the cytoplasm. In terms of biological role, cell division protein that is part of the divisome complex and is recruited early to the Z-ring. Probably stimulates Z-ring formation, perhaps through the cross-linking of FtsZ protofilaments. Its function overlaps with FtsA. The protein is Cell division protein SepF of Prochlorococcus marinus (strain NATL1A).